Here is a 427-residue protein sequence, read N- to C-terminus: Endothelin-1 receptor (427 aa).

The signal sequence occupies residues 1 to 20 (METLCLRASFWLALVGCVIS). Topologically, residues 21–80 (DNPERYSTNLSNHVDDFTTFRGTELSFLVTTHQPTNLVLPSNGSMHNYCPQQTKITSAFK) are extracellular. N29 and N62 each carry an N-linked (GlcNAc...) asparagine glycan. A helical membrane pass occupies residues 81 to 102 (YINTVISCTIFIVGMVGNATLL). The Cytoplasmic segment spans residues 103–112 (RIIYQNKCMR). Residues 113–132 (NGPNALIASLALGDLIYVVI) form a helical membrane-spanning segment. Topologically, residues 133–159 (DLPINVFKLLAGRWPFDHNDFGVFLCK) are extracellular. A disulfide bridge links C158 with C239. The helical transmembrane segment at 160-181 (LFPFLQKSSVGITVLNLCALSV) threads the bilayer. Residues 182–205 (DRYRAVASWSRVQGIGIPLVTAIE) lie on the Cytoplasmic side of the membrane. A helical transmembrane segment spans residues 206 to 229 (IVSIWILSFILAIPEAIGFVMVPF). At 230-256 (EYRGEQHKTCMLNATSKFMEFYQDVKD) the chain is on the extracellular side. The chain crosses the membrane as a helical span at residues 257 to 278 (WWLFGFYFCMPLVCTAIFYTLM). Residues 279–306 (TCEMLNRRNGSLRIALSEHLKQRREVAK) lie on the Cytoplasmic side of the membrane. The helical transmembrane segment at 307–328 (TVFCLVVIFALCWFPLHLSRIL) threads the bilayer. Residues 329 to 347 (KKTVYNEMDKNRCELLSFL) lie on the Extracellular side of the membrane. Residues 348–372 (LLMDYIGINLATMNSCINPIALYFV) form a helical membrane-spanning segment. At 373–427 (SKKFKNCFQSCLCCCCYQSKSLMTSVPMNGTSIQWKNHDQNNHNTDRSSHKDSMN) the chain is on the cytoplasmic side. The interval 406 to 427 (QWKNHDQNNHNTDRSSHKDSMN) is disordered. Positions 408–427 (KNHDQNNHNTDRSSHKDSMN) are enriched in basic and acidic residues. Position 425 is a phosphoserine (S425).

It belongs to the G-protein coupled receptor 1 family. Endothelin receptor subfamily. EDNRA sub-subfamily. In terms of assembly, interacts with HDAC7 and KAT5. As to expression, isoform 1, isoform 3 and isoform 4 are expressed in a variety of tissues, with highest levels in the aorta and cerebellum, followed by lung, atrium and cerebral cortex, lower levels in the placenta, kidney, adrenal gland, duodenum, colon, ventricle and liver but no expression in umbilical vein endothelial cells. Within the placenta, isoform 1, isoform 2, isoform 3 and isoform 4 are expressed in the villi and stem villi vessels.

It is found in the cell membrane. In terms of biological role, receptor for endothelin-1. Mediates its action by association with G proteins that activate a phosphatidylinositol-calcium second messenger system. The rank order of binding affinities for ET-A is: ET1 &gt; ET2 &gt;&gt; ET3. In Homo sapiens (Human), this protein is Endothelin-1 receptor.